The sequence spans 338 residues: Glyceraldehyde-3-phosphate dehydrogenase (338 aa).

NAD(+)-binding positions include 12–13 (RI), aspartate 34, and arginine 79. D-glyceraldehyde 3-phosphate-binding positions include 150–152 (SCT), threonine 181, 210–211 (TG), and arginine 233. The active-site Nucleophile is the cysteine 151. Asparagine 315 contacts NAD(+).

This sequence belongs to the glyceraldehyde-3-phosphate dehydrogenase family. In terms of assembly, homotetramer.

It localises to the cytoplasm. The enzyme catalyses D-glyceraldehyde 3-phosphate + phosphate + NAD(+) = (2R)-3-phospho-glyceroyl phosphate + NADH + H(+). Its pathway is carbohydrate degradation; glycolysis; pyruvate from D-glyceraldehyde 3-phosphate: step 1/5. The protein is Glyceraldehyde-3-phosphate dehydrogenase (gpd1) of Hypocrea atroviridis (Trichoderma atroviride).